Consider the following 262-residue polypeptide: Apolipoprotein A-I (262 aa).

The N-terminal stretch at 1 to 18 is a signal peptide; the sequence is MKAVVLTLAVLFLTGSQA. 2 tandem repeats follow at residues 67–88 and 89–110. Residues 67-262 form a 10 X approximate tandem repeats region; the sequence is LKLLDNWDTL…DEASKKLNAQ (196 aa). Position 109 is a methionine sulfoxide (methionine 109). Residues 111 to 121 form a 3; half-length repeat; that stretch reads KDLEEVKQKVQ. 5 consecutive repeat copies span residues 122–142, 144–165, 166–184, 185–206, and 207–227. One copy of the 9; half-length repeat lies at 228–238; sequence PALEDLRQGLM. Residue methionine 238 is modified to Methionine sulfoxide. Copy 10 of the repeat occupies 239-262; it reads PVLESLKVSILAAIDEASKKLNAQ.

It belongs to the apolipoprotein A1/A4/E family. In terms of assembly, homodimer. Interacts with APOA1BP and CLU. Component of a sperm activating protein complex (SPAP), consisting of APOA1, an immunoglobulin heavy chain, an immunoglobulin light chain and albumin. Interacts with NDRG1. Interacts with SCGB3A2. Interacts with NAXE and YJEFN3. In terms of processing, glycosylated. Post-translationally, palmitoylated. Phosphorylation sites are present in the extracellular medium. As to expression, major protein of plasma HDL, also found in chylomicrons.

The protein resides in the secreted. In terms of biological role, participates in the reverse transport of cholesterol from tissues to the liver for excretion by promoting cholesterol efflux from tissues and by acting as a cofactor for the lecithin cholesterol acyltransferase (LCAT). As part of the SPAP complex, activates spermatozoa motility. This chain is Apolipoprotein A-I (APOA1), found in Pantholops hodgsonii (Chiru).